The sequence spans 171 residues: Mitochondrial import inner membrane translocase subunit Tim17-A (171 aa).

Cysteines 9 and 78 form a disulfide. The next 3 membrane-spanning stretches (helical) occupy residues 17-37 (CGGA…FKGF), 63-77 (GGSF…STID), and 113-133 (VGSA…GILL). Positions 144-171 (GPQFTEDHSQLPSSQLPSSPFGDYRQYQ) are disordered. Over residues 153–163 (QLPSSQLPSSP) the composition is skewed to low complexity.

Belongs to the Tim17/Tim22/Tim23 family. In terms of assembly, component of the TIM23 complex at least composed of TIMM23, TIMM17 (TIMM17A or TIMM17B) and TIMM50. The complex interacts with the TIMM44 component of the PAM complex and with DNAJC15. Degraded by YMEL1 downstream of the integrated stress response (ISR).

It is found in the mitochondrion inner membrane. In terms of biological role, essential component of the TIM23 complex, a complex that mediates the translocation of transit peptide-containing proteins across the mitochondrial inner membrane. In Mus musculus (Mouse), this protein is Mitochondrial import inner membrane translocase subunit Tim17-A (Timm17a).